We begin with the raw amino-acid sequence, 394 residues long: Na(+)/H(+) antiporter NhaA 2 (394 aa).

11 helical membrane-spanning segments follow: residues 13–33, 58–78, 93–113, 124–144, 153–173, 176–196, 208–228, 260–280, 291–311, 327–347, and 361–381; these read FGGV…NGFL, LILW…GLEL, IALP…IFWA, GWAI…MLLG, IFLL…IAIF, TKLS…LWVL, ILVT…ATIA, YFIL…GVQI, IFFG…YIFI, FYGV…VNSL, and LGIL…LLVF.

The protein belongs to the NhaA Na(+)/H(+) (TC 2.A.33) antiporter family.

The protein localises to the cell inner membrane. The enzyme catalyses Na(+)(in) + 2 H(+)(out) = Na(+)(out) + 2 H(+)(in). Na(+)/H(+) antiporter that extrudes sodium in exchange for external protons. The protein is Na(+)/H(+) antiporter NhaA 2 of Campylobacter fetus subsp. fetus (strain 82-40).